A 267-amino-acid polypeptide reads, in one-letter code: Ribosomal RNA large subunit methyltransferase E (267 aa).

The S-adenosyl-L-methionine site is built by glycine 52, phenylalanine 54, aspartate 72, aspartate 90, and aspartate 114. Lysine 154 (proton acceptor) is an active-site residue. A compositionally biased stretch (low complexity) spans 212–252 (EAPRAPAPPEQAAAPEEATAPATRAARQKPAPAKKPAAAKR). The segment at 212-267 (EAPRAPAPPEQAAAPEEATAPATRAARQKPAPAKKPAAAKRPAARKRAAKKPARRA) is disordered. Basic residues predominate over residues 253 to 267 (PAARKRAAKKPARRA).

Belongs to the class I-like SAM-binding methyltransferase superfamily. RNA methyltransferase RlmE family.

The protein localises to the cytoplasm. It catalyses the reaction uridine(2552) in 23S rRNA + S-adenosyl-L-methionine = 2'-O-methyluridine(2552) in 23S rRNA + S-adenosyl-L-homocysteine + H(+). Functionally, specifically methylates the uridine in position 2552 of 23S rRNA at the 2'-O position of the ribose in the fully assembled 50S ribosomal subunit. The polypeptide is Ribosomal RNA large subunit methyltransferase E (Anaeromyxobacter dehalogenans (strain 2CP-C)).